The sequence spans 194 residues: Peptidyl-tRNA hydrolase (194 aa).

TRNA is bound at residue Tyr16. His21 acts as the Proton acceptor in catalysis. Phe67, Asn69, and Asn115 together coordinate tRNA.

The protein belongs to the PTH family. Monomer.

It is found in the cytoplasm. The catalysed reaction is an N-acyl-L-alpha-aminoacyl-tRNA + H2O = an N-acyl-L-amino acid + a tRNA + H(+). Its function is as follows. Hydrolyzes ribosome-free peptidyl-tRNAs (with 1 or more amino acids incorporated), which drop off the ribosome during protein synthesis, or as a result of ribosome stalling. Functionally, catalyzes the release of premature peptidyl moieties from peptidyl-tRNA molecules trapped in stalled 50S ribosomal subunits, and thus maintains levels of free tRNAs and 50S ribosomes. This Salmonella heidelberg (strain SL476) protein is Peptidyl-tRNA hydrolase.